The primary structure comprises 245 residues: MPYTWKFLGISKQLSLENGIAKLNQLLNLEVDLDIQTIRVPSDPDGGTAADEYIRYEMRLDISNLDEGTYSKFIFLGNSKMEVPMFLCYCGTDNRNEVVLQWLKAEYGVIMWPIKFEQKTMIKLADASIVHVTKENIEQITWFSSKLYFEPETQDKNLRQFSIEIPRESCEGLALGYGNTMHPYNDAIVPYIYNETGMAVERLPLTSVILAGHTKIMRESIVTSTRSLRNRVLAVVLQSIQFTSE.

The protein belongs to the CENP-L/IML3 family. As to quaternary structure, forms a heterodimer with IML3. CHL4-IML3 is part of a larger constitutive centromere-associated network (CCAN) (also known as central kinetochore CTF19 complex in yeast), which is composed of at least AME1, CHL4, CNN1, CTF3, CTF19, IML3, MCM16, MCM21, MCM22, MHF1, MHF2, MIF2, NKP1, NKP2, OKP1 and WIP1. Interacts with CHL4 and CTF19.

The protein resides in the nucleus. It localises to the chromosome. It is found in the centromere. Its subcellular location is the kinetochore. Component of the kinetochore, a multiprotein complex that assembles on centromeric DNA and attaches chromosomes to spindle microtubules, mediating chromosome segregation and sister chromatid segregation during meiosis and mitosis. Component of the inner kinetochore constitutive centromere-associated network (CCAN), which serves as a structural platform for outer kinetochore assembly. This Saccharomyces cerevisiae (strain ATCC 204508 / S288c) (Baker's yeast) protein is Inner kinetochore subunit IML3 (IML3).